Consider the following 299-residue polypeptide: MADLPASLLILNGKSADNEQLREAIMLLRDEGIKIHVRVTWEKGDAARFVDEARQLGVATVIAGGGDGTINEVATALIQCEGNVIPALGILPLGTANDFATSVGIPVALDKALKLAIAGNAIEIDIAQVNKETCFINMATGGFGTRITTETPEKLKAALGGVSYIIHGLMRMDTLQPDRCEIRGENFHWQGDALVIGIGNGRQAGGGQQLCPNALINDGLLQLRIFTGDEILPALVSTLKPDEENPNIIDGASAWFDIQAPHDITFNLDGEPLSGQNFHIEILPAALRCRLPPDCPLLR.

Positions 2-133 constitute a DAGKc domain; it reads ADLPASLLIL…IDIAQVNKET (132 aa). ATP-binding positions include Thr40, 66–72, and Thr95; that span reads GDGTINE. Leu215, Asp218, and Leu220 together coordinate Mg(2+). Glu271 (proton acceptor) is an active-site residue.

This sequence belongs to the diacylglycerol/lipid kinase family. YegS lipid kinase subfamily. Mg(2+) serves as cofactor. Requires Ca(2+) as cofactor.

It is found in the cytoplasm. In terms of biological role, probably phosphorylates lipids; the in vivo substrate is unknown. The protein is Probable lipid kinase YegS of Escherichia fergusonii (strain ATCC 35469 / DSM 13698 / CCUG 18766 / IAM 14443 / JCM 21226 / LMG 7866 / NBRC 102419 / NCTC 12128 / CDC 0568-73).